Consider the following 73-residue polypeptide: Antimicrobial peptide 6 (73 aa).

The N-terminal stretch at 1 to 22 is a signal peptide; that stretch reads MQIKHLITLFFLVLIVADQCSA. A propeptide spanning residues 45–73 is cleaved from the precursor; it reads EISTQIDQYRNLQKREAELEELLDRLPMY.

It belongs to the non-disulfide-bridged peptide (NDBP) superfamily. Short antimicrobial peptide (group 4) family. In terms of tissue distribution, expressed by the venom gland.

The protein resides in the secreted. Antibacterial peptide. This Tityus costatus (Brazilian scorpion) protein is Antimicrobial peptide 6.